A 393-amino-acid polypeptide reads, in one-letter code: Ig gamma-1 chain C region, membrane-bound form (393 aa).

The interval 1–97 (AKTTPPSVYP…ASSTKVDKKI (97 aa)) is CH1. Cys-27 and Cys-82 are joined by a disulfide. Positions 98-110 (VPRDCGCKPCICT) are hinge. The interval 111–217 (VPEVSSVFIF…PIEKTISKTK (107 aa)) is CH2. Disulfide bonds link Cys-138–Cys-198 and Cys-244–Cys-302. An N-linked (GlcNAc...) asparagine glycan is attached at Asn-174. The tract at residues 218 to 324 (GRPKAPQVYT…EKSLSHSPGL (107 aa)) is CH3. Residues 340–357 (GLWTTITIFISLFLLSVC) form a helical membrane-spanning segment. The Cytoplasmic portion of the chain corresponds to 358–393 (YSAAVTLFKVKWIFSSVVELKQTLVPEYKNMIGQAP).

Its subcellular location is the cell membrane. This Mus musculus (Mouse) protein is Ig gamma-1 chain C region, membrane-bound form (Ighg1).